The chain runs to 349 residues: tRNA N6-adenosine threonylcarbamoyltransferase (349 aa).

Residues histidine 111 and histidine 115 each coordinate Fe cation. Residues 134–138 (LVSGG), aspartate 167, glycine 180, aspartate 184, and asparagine 279 each bind substrate. Aspartate 307 is a binding site for Fe cation.

It belongs to the KAE1 / TsaD family. It depends on Fe(2+) as a cofactor.

It localises to the cytoplasm. It catalyses the reaction L-threonylcarbamoyladenylate + adenosine(37) in tRNA = N(6)-L-threonylcarbamoyladenosine(37) in tRNA + AMP + H(+). Functionally, required for the formation of a threonylcarbamoyl group on adenosine at position 37 (t(6)A37) in tRNAs that read codons beginning with adenine. Is involved in the transfer of the threonylcarbamoyl moiety of threonylcarbamoyl-AMP (TC-AMP) to the N6 group of A37, together with TsaE and TsaB. TsaD likely plays a direct catalytic role in this reaction. The chain is tRNA N6-adenosine threonylcarbamoyltransferase from Nostoc punctiforme (strain ATCC 29133 / PCC 73102).